The following is a 177-amino-acid chain: Large ribosomal subunit protein uL6 (177 aa).

This sequence belongs to the universal ribosomal protein uL6 family. Part of the 50S ribosomal subunit.

Functionally, this protein binds to the 23S rRNA, and is important in its secondary structure. It is located near the subunit interface in the base of the L7/L12 stalk, and near the tRNA binding site of the peptidyltransferase center. This is Large ribosomal subunit protein uL6 from Paramagnetospirillum magneticum (strain ATCC 700264 / AMB-1) (Magnetospirillum magneticum).